Reading from the N-terminus, the 1390-residue chain is Hepatocyte growth factor receptor (1390 aa).

A signal peptide spans 1-24; sequence MKAPAVLAPGILVLLFTLVQRSNG. Residues 25–932 lie on the Extracellular side of the membrane; sequence ECKEALAKSE…VIVQPDQNFT (908 aa). The region spanning 27–515 is the Sema domain; the sequence is KEALAKSEMN…TGKKITKIPL (489 aa). Asparagine 45 carries N-linked (GlcNAc...) asparagine glycosylation. 4 cysteine pairs are disulfide-bonded: cysteine 95–cysteine 101, cysteine 98–cysteine 160, cysteine 133–cysteine 141, and cysteine 172–cysteine 175. A glycan (N-linked (GlcNAc...) asparagine) is linked at asparagine 106. An N-linked (GlcNAc...) asparagine glycan is attached at asparagine 149. N-linked (GlcNAc...) asparagine glycosylation occurs at asparagine 202. Disulfide bonds link cysteine 298–cysteine 363 and cysteine 385–cysteine 397. 2 N-linked (GlcNAc...) asparagine glycosylation sites follow: asparagine 399 and asparagine 405. Disulfide bonds link cysteine 520/cysteine 538, cysteine 526/cysteine 561, cysteine 529/cysteine 545, and cysteine 541/cysteine 551. IPT/TIG domains follow at residues 563-655, 657-739, and 742-836; these read PAIY…FSYV, PVIT…FSYR, and PIVY…LIYV. O-linked (Man) threonine glycosylation occurs at threonine 582. Asparagine 607 and asparagine 635 each carry an N-linked (GlcNAc...) asparagine glycan. O-linked (Man) threonine glycans are attached at residues threonine 676 and threonine 761. N-linked (GlcNAc...) asparagine glycans are attached at residues asparagine 785, asparagine 879, and asparagine 930. Residues 933 to 955 traverse the membrane as a helical segment; sequence GLIAGVVSISIALLLLLGFFLWL. At 956-1390 the chain is on the cytoplasmic side; the sequence is KKRKQIKDLG…TRPASFWETS (435 aa). The residue at position 966 (serine 966) is a Phosphoserine. Threonine 977 carries the phosphothreonine modification. Phosphoserine is present on residues serine 990, serine 997, and serine 1000. Tyrosine 1003 carries the post-translational modification Phosphotyrosine. Positions 1078 to 1345 constitute a Protein kinase domain; that stretch reads VHFNEVIGRG…RISAIFSTFI (268 aa). Residues 1084 to 1092 and lysine 1110 contribute to the ATP site; that span reads IGRGHFGCV. Aspartate 1204 (proton acceptor) is an active-site residue. The segment at 1212-1390 is interaction with RANBP9; it reads LDEKFTVKVA…TRPASFWETS (179 aa). Tyrosine 1230 carries the post-translational modification Phosphotyrosine. Phosphotyrosine; by autocatalysis is present on residues tyrosine 1234 and tyrosine 1235. The residue at position 1289 (threonine 1289) is a Phosphothreonine. The interval 1320 to 1359 is interaction with MUC20; the sequence is WHPKAEMRPSFSELVSRISAIFSTFIGEHYVHVNATYVNV. Phosphotyrosine; by autocatalysis occurs at positions 1349 and 1356. Position 1365 is a phosphotyrosine (tyrosine 1365).

This sequence belongs to the protein kinase superfamily. Tyr protein kinase family. Heterodimer made of an alpha chain (50 kDa) and a beta chain (145 kDa) which are disulfide linked. Binds PLXNB1. Interacts when phosphorylated with downstream effectors including STAT3, PIK3R1, SRC, PCLG1, GRB2 and GAB1. Interacts with SPSB1, SPSB2 and SPSB4. Interacts with INPP5D/SHIP1. When phosphorylated at Tyr-1356, interacts with INPPL1/SHIP2. Interacts with RANBP9 and RANBP10, as well as SPSB1, SPSB2, SPSB3 and SPSB4. SPSB1 binding occurs in the presence and in the absence of HGF, however HGF treatment has a positive effect on this interaction. Interacts with MUC20; prevents interaction with GRB2 and suppresses hepatocyte growth factor-induced cell proliferation. Interacts with GRB10. Interacts with PTPN1 and PTPN2. Interacts with HSP90AA1 and HSP90AB1; the interaction suppresses MET kinase activity. Interacts with tensin TNS3. Interacts (when phosphorylated) with tensin TNS4 (via SH2 domain); the interaction increases MET protein stability by inhibiting MET endocytosis and subsequent lysosomal degradation. In terms of processing, autophosphorylated in response to ligand binding on Tyr-1234 and Tyr-1235 in the kinase domain leading to further phosphorylation of Tyr-1349 and Tyr-1356 in the C-terminal multifunctional docking site. Dephosphorylated by PTPRJ at Tyr-1349 and Tyr-1365. Dephosphorylated by PTPN1 and PTPN2. Post-translationally, ubiquitinated. Ubiquitination by CBL regulates the receptor stability and activity through proteasomal degradation. O-mannosylation of IPT/TIG domains by TMEM260 is required for protein maturation. O-mannosylated residues are composed of single mannose glycans that are not elongated or modified.

It is found in the membrane. It catalyses the reaction L-tyrosyl-[protein] + ATP = O-phospho-L-tyrosyl-[protein] + ADP + H(+). Its activity is regulated as follows. In its inactive state, the C-terminal tail interacts with the catalytic domain and inhibits the kinase activity. Upon ligand binding, the C-terminal tail is displaced and becomes phosphorylated, thus increasing the kinase activity. Its function is as follows. Receptor tyrosine kinase that transduces signals from the extracellular matrix into the cytoplasm by binding to hepatocyte growth factor/HGF ligand. Regulates many physiological processes including proliferation, scattering, morphogenesis and survival. Ligand binding at the cell surface induces autophosphorylation of MET on its intracellular domain that provides docking sites for downstream signaling molecules. Following activation by ligand, interacts with the PI3-kinase subunit PIK3R1, PLCG1, SRC, GRB2, STAT3 or the adapter GAB1. Recruitment of these downstream effectors by MET leads to the activation of several signaling cascades including the RAS-ERK, PI3 kinase-AKT, or PLCgamma-PKC. The RAS-ERK activation is associated with the morphogenetic effects while PI3K/AKT coordinates prosurvival effects. During embryonic development, MET signaling plays a role in gastrulation, development and migration of muscles and neuronal precursors, angiogenesis and kidney formation. In adults, participates in wound healing as well as organ regeneration and tissue remodeling. Also promotes differentiation and proliferation of hematopoietic cells. This Pan troglodytes (Chimpanzee) protein is Hepatocyte growth factor receptor (MET).